The sequence spans 308 residues: Taste receptor type 2 member 43 (308 aa).

A topological domain (extracellular) is located at residue M1. The helical transmembrane segment at I2–F22 threads the bilayer. The Cytoplasmic portion of the chain corresponds to A23–Q46. A helical membrane pass occupies residues I47–Y67. Topologically, residues S68 to N86 are extracellular. Residues L87 to L107 traverse the membrane as a helical segment. Over L108–K126 the chain is Cytoplasmic. The chain crosses the membrane as a helical span at residues S127–V147. Residues N148–T178 are Extracellular-facing. N161 and N176 each carry an N-linked (GlcNAc...) asparagine glycan. Residues V179 to I199 form a helical membrane-spanning segment. Topologically, residues C200 to Q229 are cytoplasmic. Residues T230–W249 form a helical membrane-spanning segment. At S250 to A258 the chain is on the extracellular side. The helical transmembrane segment at I259–I279 threads the bilayer. Topologically, residues W280–P308 are cytoplasmic.

The protein belongs to the G-protein coupled receptor T2R family.

The protein resides in the membrane. It localises to the cell projection. It is found in the cilium membrane. Functionally, gustducin-coupled receptor immplicated in the perception of bitter compounds in the oral cavity and the gastrointestinal tract. Signals through PLCB2 and the calcium-regulated cation channel TRPM5. Activated by the sulfonyl amide sweeteners saccharin and acesulfame K. In airway epithelial cells, binding of bitter compounds increases the intracellular calcium ion concentration and stimulates ciliary beat frequency. May act as chemosensory receptors in airway epithelial cells to detect and eliminate potential noxious agents from the airways. The polypeptide is Taste receptor type 2 member 43 (TAS2R43) (Macaca mulatta (Rhesus macaque)).